Reading from the N-terminus, the 28-residue chain is Humanin-like 4 (28 aa).

It belongs to the humanin family. Highly expressed in testis. Also expressed in kidney, heart, skeletal muscles and brain.

Its subcellular location is the secreted. The protein localises to the cytoplasm. Functionally, plays a role as a neuroprotective and antiapoptotic factor. In Homo sapiens (Human), this protein is Humanin-like 4.